Here is a 168-residue protein sequence, read N- to C-terminus: uncharacterized protein (168 aa).

2 disordered regions span residues 1-81 (MSSA…GRSW) and 119-150 (RDLS…STVA). Residues 7–34 (SRTSRSKATGASSSSISSSIRASPSSSS) are compositionally biased toward low complexity. The segment covering 43–67 (TRRRRRRTGRRSTKRSIISPRRRRM) has biased composition (basic residues). The span at 123-146 (ESASTGSENLSRKASNQSQSQGRL) shows a compositional bias: polar residues.

This is an uncharacterized protein from Human adenovirus C serotype 2 (HAdV-2).